The sequence spans 275 residues: Serine/threonine-protein phosphatase PGAM5, mitochondrial (275 aa).

Residues 7–24 (LIAGGSAAAAILGVVAAG) traverse the membrane as a helical segment.

Belongs to the phosphoglycerate mutase family. BPG-dependent PGAM subfamily. In terms of processing, phosphorylated by the RIPK1/RIPK3 complex under necrotic conditions. This phosphorylation increases PGAM5 phosphatase activity.

It is found in the mitochondrion outer membrane. It carries out the reaction O-phospho-L-seryl-[protein] + H2O = L-seryl-[protein] + phosphate. It catalyses the reaction O-phospho-L-threonyl-[protein] + H2O = L-threonyl-[protein] + phosphate. Displays phosphatase activity for serine/threonine residues. Has apparently no phosphoglycerate mutase activity. May be regulator of mitochondrial dynamics. May be a central mediator for programmed necrosis. The protein is Serine/threonine-protein phosphatase PGAM5, mitochondrial (pgam5) of Xenopus laevis (African clawed frog).